A 214-amino-acid polypeptide reads, in one-letter code: Large ribosomal subunit protein uL29m (214 aa).

The protein belongs to the universal ribosomal protein uL29 family. As to quaternary structure, component of the mitochondrial large ribosomal subunit. Mature mitochondrial ribosomes consist of a small (37S) and a large (54S) subunit. The 37S subunit contains at least 33 different proteins and 1 molecule of RNA (15S). The 54S subunit contains at least 45 different proteins and 1 molecule of RNA (21S).

The protein localises to the mitochondrion. This is Large ribosomal subunit protein uL29m (mrpl4) from Aspergillus terreus (strain NIH 2624 / FGSC A1156).